Here is a 1483-residue protein sequence, read N- to C-terminus: Dynein axonemal assembly factor 1 homolog (1483 aa).

6 LRR repeats span residues 34–56 (RLND…EEYT), 57–78 (ELKC…EKLS), 79–100 (KLKC…DPCR), 101–122 (ELDT…GTNV), 125–146 (VLNT…SDLI), and 150–171 (TLSV…KIFE). An LRRCT domain is found at 185–223 (PVVSRLPQYRKTLILACKELTYLDSRPVFPRDRACAEAW). Disordered stretches follow at residues 249–282 (SINC…TCAE), 300–327 (EEVS…GTSS), 945–986 (DSGD…HGTK), and 1167–1213 (SENE…SIDD). A compositionally biased stretch (polar residues) spans 311–327 (DGTNSSSSLEDNDGTSS). A compositionally biased stretch (basic and acidic residues) spans 1183-1196 (TNDKESSDIMEKNG).

The protein belongs to the DNAAF1 family.

The protein resides in the cell projection. Its subcellular location is the cilium. In terms of biological role, cilium-specific protein required for cilia structures. The chain is Dynein axonemal assembly factor 1 homolog (dtr) from Drosophila melanogaster (Fruit fly).